Reading from the N-terminus, the 314-residue chain is ATP synthase gamma chain (314 aa).

This sequence belongs to the ATPase gamma chain family. F-type ATPases have 2 components, CF(1) - the catalytic core - and CF(0) - the membrane proton channel. CF(1) has five subunits: alpha(3), beta(3), gamma(1), delta(1), epsilon(1). CF(0) has three main subunits: a, b and c.

The protein resides in the cellular thylakoid membrane. Produces ATP from ADP in the presence of a proton gradient across the membrane. The gamma chain is believed to be important in regulating ATPase activity and the flow of protons through the CF(0) complex. This Synechocystis sp. (strain ATCC 27184 / PCC 6803 / Kazusa) protein is ATP synthase gamma chain.